We begin with the raw amino-acid sequence, 338 residues long: POU domain, class 4, transcription factor 3 (338 aa).

Residues 56–65 carry the POU-IV box motif; sequence RAEALAAVDI. The 78-residue stretch at 179–256 folds into the POU-specific domain; sequence DVESDPRELE…VLQAWLEEAE (78 aa). The segment at residues 274 to 333 is a DNA-binding region (homeobox); that stretch reads RKRKRTSIAAPEKRSLEAYFAIQPRPSSEKIAAIAEKLDLKKNVVRVWFCNQRQKQKRMK.

The protein belongs to the POU transcription factor family. Class-4 subfamily. As to quaternary structure, interacts with ISL1. In terms of tissue distribution, brain.

Its subcellular location is the nucleus. The protein localises to the cytoplasm. Its function is as follows. Acts as a transcriptional activator. Acts by binding to sequences related to the consensus octamer motif 5'-ATGCAAAT-3' in the regulatory regions of its target genes. Involved in the auditory system development, required for terminal differentiation of hair cells in the inner ear. This is POU domain, class 4, transcription factor 3 from Mus musculus (Mouse).